The sequence spans 197 residues: Imidazoleglycerol-phosphate dehydratase (197 aa).

Belongs to the imidazoleglycerol-phosphate dehydratase family.

The protein resides in the cytoplasm. It catalyses the reaction D-erythro-1-(imidazol-4-yl)glycerol 3-phosphate = 3-(imidazol-4-yl)-2-oxopropyl phosphate + H2O. The protein operates within amino-acid biosynthesis; L-histidine biosynthesis; L-histidine from 5-phospho-alpha-D-ribose 1-diphosphate: step 6/9. This chain is Imidazoleglycerol-phosphate dehydratase, found in Pseudomonas putida (strain W619).